We begin with the raw amino-acid sequence, 198 residues long: Recombination protein RecR (198 aa).

A C4-type zinc finger spans residues 57–72 (CSICGHITDQDPCYIC). Residues 80–175 (SVICVVQDPK…KLSRIAHGLP (96 aa)) enclose the Toprim domain.

Belongs to the RecR family.

Functionally, may play a role in DNA repair. It seems to be involved in an RecBC-independent recombinational process of DNA repair. It may act with RecF and RecO. This Bacillus velezensis (strain DSM 23117 / BGSC 10A6 / LMG 26770 / FZB42) (Bacillus amyloliquefaciens subsp. plantarum) protein is Recombination protein RecR.